We begin with the raw amino-acid sequence, 165 residues long: HTH-type transcriptional regulator IscR (165 aa).

Residues 2–131 enclose the HTH rrf2-type domain; that stretch reads RLTSKGRYAV…NNITLAELVS (130 aa). The H-T-H motif DNA-binding region spans 28 to 51; the sequence is LAEISERQGISLSYLEQLFSRLRK. Residues C92, C98, and C104 each contribute to the [2Fe-2S] cluster site. The disordered stretch occupies residues 144-165; the sequence is NDTRRPLTNGRPQETINVNLHA. The span at 153 to 165 shows a compositional bias: polar residues; sequence GRPQETINVNLHA.

It depends on [2Fe-2S] cluster as a cofactor.

Functionally, regulates the transcription of several operons and genes involved in the biogenesis of Fe-S clusters and Fe-S-containing proteins. In Sodalis glossinidius (strain morsitans), this protein is HTH-type transcriptional regulator IscR.